Consider the following 106-residue polypeptide: Isocitrate dehydrogenase [NAD] subunit gamma, mitochondrial (106 aa).

It belongs to the isocitrate and isopropylmalate dehydrogenases family. Heterooligomer of subunits alpha (IDH3A), beta (IDH3B), and gamma (IDH3G) in the apparent ratio of 2:1:1. The heterodimer containing one IDH3A and one IDH3B subunit and the heterodimer containing one IDH3A and one IDH3G subunit assemble into a heterotetramer (which contains two subunits of IDH3A, one of IDH3B and one of IDH3G) and further into the heterooctamer.

Its subcellular location is the mitochondrion. The heterotetramer and the heterodimer composed of IDH3A and IDH3G subunits can be allosterically activated by citrate (CIT) or/and ADP, and the two activators can act independently or synergistically. The heterodimer composed of IDH3A and IDH3B subunits cannot be allosterically regulated and the allosteric regulation of the heterotetramer is through the IDH3G subunit and not the IDH3B subunit. The IDH3G subunit contains the allosteric site which consists of a CIT-binding site and an ADP-binding site, and the binding of CIT and ADP causes conformational changes at the allosteric site which are transmitted to the active site in the catalytic subunit (IDH3A) through a cascade of conformational changes at the heterodimer interface, leading to stabilization of the isocitrate-binding at the active site and thus activation of the enzyme. ATP can activate the heterotetramer and the heterodimer composed of IDH3A and IDH3G subunits at low concentrations but inhibits their activities at high concentrations, whereas ATP exhibits only inhibitory effect on the heterodimer composed of IDH3A and IDH3B subunits. Functionally, regulatory subunit which plays a role in the allosteric regulation of the enzyme catalyzing the decarboxylation of isocitrate (ICT) into alpha-ketoglutarate. The heterodimer composed of the alpha (IDH3A) and beta (IDH3B) subunits and the heterodimer composed of the alpha (IDH3A) and gamma (IDH3G) subunits, have considerable basal activity but the full activity of the heterotetramer (containing two subunits of IDH3A, one of IDH3B and one of IDH3G) requires the assembly and cooperative function of both heterodimers. This is Isocitrate dehydrogenase [NAD] subunit gamma, mitochondrial (IDH3G) from Sus scrofa (Pig).